Consider the following 432-residue polypeptide: Adenylosuccinate synthetase (432 aa).

GTP is bound by residues 13–19 and 41–43; these read GDEGKGK and GHT. The Proton acceptor role is filled by D14. Mg(2+) is bound by residues D14 and G41. Residues 14–17, 39–42, T130, R144, Q225, T240, and R304 contribute to the IMP site; these read DEGK and NAGH. H42 acts as the Proton donor in catalysis. 300-306 is a binding site for substrate; the sequence is ATTGRRR. GTP is bound by residues R306, 332-334, and 415-417; these read KLD and STG.

The protein belongs to the adenylosuccinate synthetase family. Homodimer. The cofactor is Mg(2+).

Its subcellular location is the cytoplasm. The catalysed reaction is IMP + L-aspartate + GTP = N(6)-(1,2-dicarboxyethyl)-AMP + GDP + phosphate + 2 H(+). Its pathway is purine metabolism; AMP biosynthesis via de novo pathway; AMP from IMP: step 1/2. Functionally, plays an important role in the de novo pathway of purine nucleotide biosynthesis. Catalyzes the first committed step in the biosynthesis of AMP from IMP. This chain is Adenylosuccinate synthetase, found in Salmonella paratyphi A (strain AKU_12601).